Consider the following 210-residue polypeptide: Putative tyrosine-protein phosphatase OCA1 (210 aa).

The Tyrosine-protein phosphatase domain maps to asparagine 44 to tryptophan 204. The active-site Phosphocysteine intermediate is the cysteine 140.

The protein belongs to the protein-tyrosine phosphatase family.

It is found in the cytoplasm. The catalysed reaction is O-phospho-L-tyrosyl-[protein] + H2O = L-tyrosyl-[protein] + phosphate. Functionally, putative tyrosine-protein phosphatase required for protection against superoxide stress. The polypeptide is Putative tyrosine-protein phosphatase OCA1 (OCA1) (Kluyveromyces lactis (strain ATCC 8585 / CBS 2359 / DSM 70799 / NBRC 1267 / NRRL Y-1140 / WM37) (Yeast)).